The sequence spans 450 residues: Sorting nexin-4 (450 aa).

An N-acetylmethionine modification is found at Met1. The segment at 1-46 (MEQAPPDPERQLQPAPLEPLGSPDAVLGAAVGKETEGAGEESSGVD) is disordered. Ser22 bears the Phosphoserine mark. Residues 61-187 (SVSEAEKRTG…YLFLTQEGNW (127 aa)) enclose the PX domain. A 1,2-diacyl-sn-glycero-3-phospho-(1D-myo-inositol-3-phosphate) contacts are provided by Arg106, Ser108, Lys132, and Arg154.

It belongs to the sorting nexin family. Heterodimer; heterodimerizes with SNX7 or SNX30. Interacts with WWC1/KIBRA. Identified in a complex with WWC1/KIBRA and dynein components DYNLL1 and DYNC1I2. Interacts with BIN1.

The protein resides in the early endosome. It is found in the early endosome membrane. Its function is as follows. Involved in the regulation of endocytosis and in several stages of intracellular trafficking. Plays a role in recycling endocytosed transferrin receptor and prevent its degradation. Involved in autophagosome assembly by regulating trafficking and recycling of phospholipid scramblase ATG9A. In Pongo abelii (Sumatran orangutan), this protein is Sorting nexin-4.